The following is a 564-amino-acid chain: Dihydroxy-acid dehydratase (564 aa).

Residue Cys-51 coordinates [2Fe-2S] cluster. Residue Asp-83 coordinates Mg(2+). Cys-124 lines the [2Fe-2S] cluster pocket. Asp-125 and Lys-126 together coordinate Mg(2+). Residue Lys-126 is modified to N6-carboxylysine. Cys-196 serves as a coordination point for [2Fe-2S] cluster. Glu-448 contacts Mg(2+). The active-site Proton acceptor is the Ser-474.

This sequence belongs to the IlvD/Edd family. As to quaternary structure, homodimer. [2Fe-2S] cluster is required as a cofactor. Requires Mg(2+) as cofactor.

It carries out the reaction (2R)-2,3-dihydroxy-3-methylbutanoate = 3-methyl-2-oxobutanoate + H2O. It catalyses the reaction (2R,3R)-2,3-dihydroxy-3-methylpentanoate = (S)-3-methyl-2-oxopentanoate + H2O. The protein operates within amino-acid biosynthesis; L-isoleucine biosynthesis; L-isoleucine from 2-oxobutanoate: step 3/4. It participates in amino-acid biosynthesis; L-valine biosynthesis; L-valine from pyruvate: step 3/4. Functionally, functions in the biosynthesis of branched-chain amino acids. Catalyzes the dehydration of (2R,3R)-2,3-dihydroxy-3-methylpentanoate (2,3-dihydroxy-3-methylvalerate) into 2-oxo-3-methylpentanoate (2-oxo-3-methylvalerate) and of (2R)-2,3-dihydroxy-3-methylbutanoate (2,3-dihydroxyisovalerate) into 2-oxo-3-methylbutanoate (2-oxoisovalerate), the penultimate precursor to L-isoleucine and L-valine, respectively. The sequence is that of Dihydroxy-acid dehydratase from Polynucleobacter asymbioticus (strain DSM 18221 / CIP 109841 / QLW-P1DMWA-1) (Polynucleobacter necessarius subsp. asymbioticus).